The sequence spans 346 residues: Sesquiterpene synthase Agr1 (346 aa).

4 residues coordinate Mg(2+): Asp98, Asn234, Ser238, and Glu242. The short motif at 98–102 is the DDXXD motif element; that stretch reads DNLSD. Residues Arg322 and Tyr323 each contribute to the (2E,6E)-farnesyl diphosphate site.

Belongs to the terpene synthase family. Requires Mg(2+) as cofactor.

It carries out the reaction (2E,6E)-farnesyl diphosphate = delta-cadinene + diphosphate. It catalyses the reaction (2E,6E)-farnesyl diphosphate = alpha-muurolene + diphosphate. The catalysed reaction is (2E,6E)-farnesyl diphosphate = gamma-muurolene + diphosphate. The enzyme catalyses (2E,6E)-farnesyl diphosphate = alpha-selinene + diphosphate. Its function is as follows. Terpene cyclase that catalyzes the cyclization of farnesyl diphosphate (FPP) to various sesquiterpenes, including alpha-muurolene, gamma-muurolene, alpha-selinene, beta-selinene, delta-cadinene, alpha-cadinol and delta-cadinol. Delta-cadinene is the major product of Agr1. In Cyclocybe aegerita (Black poplar mushroom), this protein is Sesquiterpene synthase Agr1.